Consider the following 671-residue polypeptide: DNA ligase (671 aa).

NAD(+) is bound by residues 32–36, 81–82, and glutamate 113; these read DAEYD and SL. Lysine 115 functions as the N6-AMP-lysine intermediate in the catalytic mechanism. NAD(+)-binding residues include arginine 136, glutamate 173, lysine 290, and lysine 314. Positions 408, 411, 426, and 432 each coordinate Zn(2+). Residues 593-671 enclose the BRCT domain; it reads EIDSPFAGKT…EAEMIRLLGA (79 aa).

It belongs to the NAD-dependent DNA ligase family. LigA subfamily. It depends on Mg(2+) as a cofactor. The cofactor is Mn(2+).

It carries out the reaction NAD(+) + (deoxyribonucleotide)n-3'-hydroxyl + 5'-phospho-(deoxyribonucleotide)m = (deoxyribonucleotide)n+m + AMP + beta-nicotinamide D-nucleotide.. In terms of biological role, DNA ligase that catalyzes the formation of phosphodiester linkages between 5'-phosphoryl and 3'-hydroxyl groups in double-stranded DNA using NAD as a coenzyme and as the energy source for the reaction. It is essential for DNA replication and repair of damaged DNA. The sequence is that of DNA ligase from Salmonella choleraesuis (strain SC-B67).